The primary structure comprises 40 residues: Accessory gland-specific peptide 57Db (40 aa).

The N-terminal stretch at 1–17 (MKITSALVLLFAGVAFA) is a signal peptide.

In terms of tissue distribution, lumen fluid of male accessory glands, becomes seminal fluid.

It localises to the secreted. Its function is as follows. Transferred from male to female during mating and may affect egglaying and behavior after mating. The protein is Accessory gland-specific peptide 57Db (Mst57Db) of Drosophila melanogaster (Fruit fly).